Reading from the N-terminus, the 480-residue chain is Major capsid protein (480 aa).

It is found in the virion. Functionally, major protein of the capsid. The protein is Major capsid protein (MCP-1) of Trichoplusia ni ascovirus 2c (TnAV-2c).